The following is a 175-amino-acid chain: MDIAIHHPWIRRPFFPFHSPSRLFDQFFGEHLLESDLFSTATSLSPFYLRPPSFLRAPSWIDTGLSEMRLEKDRFSVNLDVKHFSPEELKVKVLGDVIEVHGKHEERQDEHGFISREFHRKYRIPADVDPLTITSSLSSDGVLTVNGPRKQVSGPERTIPITREEKPAVAAAPKK.

M1 carries the N-acetylmethionine modification. Residues S19, S45, and S59 each carry the phosphoserine modification. The sHSP domain maps to R56–E164. H83 serves as a coordination point for Zn(2+). K92 carries the post-translational modification N6-acetyllysine. Residues H104, E106, H111, and H119 each contribute to the Zn(2+) site. The interval V145–K175 is disordered. Position 166 is an N6-acetyllysine (K166).

The protein belongs to the small heat shock protein (HSP20) family. Heteromer composed of three CRYAA and one CRYAB subunits. Aggregates with homologous proteins, including the small heat shock protein HSPB1, to form large heteromeric complexes. Inter-subunit bridging via zinc ions enhances stability, which is crucial as there is no protein turn over in the lens. Interacts with HSPBAP1. Interacts with TTN/titin. Interacts with TMEM109; in the cellular response to DNA damage. Interacts with DES; binds rapidly during early stages of DES filament assembly and a reduced binding seen in the later stages. Interacts with TMED10; the interaction mediates the translocation from the cytoplasm into the ERGIC (endoplasmic reticulum-Golgi intermediate compartment) and thereby secretion. Interacts with ATP6V1A and with MTOR, forming a ternary complex. In terms of tissue distribution, abundantly expressed in the lens of the eye. Expressed in ventricular cardiomyocytes of the heart. Also expressed in skeletal muscle and the kidney.

It localises to the cytoplasm. The protein resides in the cytosol. The protein localises to the nucleus. It is found in the secreted. Its subcellular location is the lysosome. In terms of biological role, may contribute to the transparency and refractive index of the lens. Has chaperone-like activity, preventing aggregation of various proteins under a wide range of stress conditions. In lens epithelial cells, stabilizes the ATP6V1A protein, preventing its degradation by the proteasome. The polypeptide is Alpha-crystallin B chain (Mus musculus (Mouse)).